Here is a 472-residue protein sequence, read N- to C-terminus: 7-dimethylallyltryptophan synthase hasE (472 aa).

Residue glutamate 138 participates in L-tryptophan binding. The dimethylallyl diphosphate site is built by arginine 154, lysine 239, tyrosine 241, lysine 313, tyrosine 315, tyrosine 393, tyrosine 460, and tyrosine 464.

It belongs to the tryptophan dimethylallyltransferase family. In terms of assembly, homodimer.

It catalyses the reaction L-tryptophan + dimethylallyl diphosphate = 7-(3-methylbut-2-enyl)-L-tryptophan + diphosphate. It carries out the reaction an N-terminal L-tryptophanyl-L-alpha-aminoacyl-[peptide] + H2O = an N-terminal L-alpha-aminoacyl-[peptide] + L-tryptophan. It functions in the pathway secondary metabolite biosynthesis. In terms of biological role, 7-dimethylallyltryptophan synthase; part of the gene cluster that mediates the biosynthesis of hexadehydro-astechrome (HAS), a tryptophan-derived iron(III)-complex that acts as a virulence factor in infected mice. Catalyzes the prenylation of L-tryptophan at the C-7 position of the indole moiety. The enzyme is specific for dimethylallyl diphosphate (DMAPP) as prenyl donor. Also accepts D-tryptophan, typtophan-derivatives with modifications at the side chain or the indole ring, and linear and cyclic dipeptides such as H-L-Trp-L-Gly-OH or cyclo-L-Trp-L-Gly as substrates, however with lower efficiency. Also has tryptophan aminopeptidase activity towards linear peptides with a tryptophanyl moiety at the N-terminus. Dipeptides are better substrates than peptides with 3 or more amino acids. Enzymatic rate constants however are much higher for the prenyltransferase activity than for the aminopeptidase activity. Within the hexadehydro-astechrome biosyntetic pathway, hasE catalyzes the prenylation of the hasD-tethered tryptophan or the resulting tethered Trp-Ala dipeptid. The HAS biosynthesis begins with the synthesis of a tethered Trp-Ala dipeptide by the NRPS hasD. The 7-dimethylallyltryptophan synthase hasE then catalyzes the prenylation of the hasD-tethered tryptophan or the resulting tethered Trp-Ala dipeptide at the C-7 position of the indole moiety. HAS biosynthesis continues via tethered intermediates with the succesive actions of the cytochrome P450 monooxygenase hasH, the O-methyltransferase hasC, and the FAD-linked oxidoreductase hasG. The resulting O-methylated diketopiperazine is then released from hasD. Finally, three O-methylated diketopiperazine molecules assemble in a trimeric complex with Fe(III) to produce hexadehydro-astechrome. In Aspergillus fumigatus (strain CBS 144.89 / FGSC A1163 / CEA10) (Neosartorya fumigata), this protein is 7-dimethylallyltryptophan synthase hasE.